The sequence spans 212 residues: Ribosome biogenesis protein RLP7 (212 aa).

This sequence belongs to the universal ribosomal protein uL30 family.

The protein localises to the nucleus. It localises to the nucleolus. Functionally, involved in the biogenesis of the 60S ribosomal subunit. May act as a specificity factor that binds precursor rRNAs and tethers the enzymes that carry out the early 5' to 3' exonucleolytic reactions that generate the mature rRNAs. In Cyberlindnera jadinii (Torula yeast), this protein is Ribosome biogenesis protein RLP7 (RLP7).